Here is a 244-residue protein sequence, read N- to C-terminus: Phosphoadenosine 5'-phosphosulfate reductase (244 aa).

Residue C239 is the Nucleophile; cysteine thiosulfonate intermediate of the active site.

It belongs to the PAPS reductase family. CysH subfamily.

The protein resides in the cytoplasm. The enzyme catalyses [thioredoxin]-disulfide + sulfite + adenosine 3',5'-bisphosphate + 2 H(+) = [thioredoxin]-dithiol + 3'-phosphoadenylyl sulfate. It functions in the pathway sulfur metabolism; hydrogen sulfide biosynthesis; sulfite from sulfate: step 3/3. Catalyzes the formation of sulfite from phosphoadenosine 5'-phosphosulfate (PAPS) using thioredoxin as an electron donor. The protein is Phosphoadenosine 5'-phosphosulfate reductase of Pectobacterium carotovorum subsp. carotovorum (strain PC1).